A 186-amino-acid chain; its full sequence is Peptidyl-tRNA hydrolase (186 aa).

Tyr-14 lines the tRNA pocket. The active-site Proton acceptor is His-19. Positions 61, 63, and 107 each coordinate tRNA.

Belongs to the PTH family. In terms of assembly, monomer.

Its subcellular location is the cytoplasm. It carries out the reaction an N-acyl-L-alpha-aminoacyl-tRNA + H2O = an N-acyl-L-amino acid + a tRNA + H(+). Its function is as follows. Hydrolyzes ribosome-free peptidyl-tRNAs (with 1 or more amino acids incorporated), which drop off the ribosome during protein synthesis, or as a result of ribosome stalling. Functionally, catalyzes the release of premature peptidyl moieties from peptidyl-tRNA molecules trapped in stalled 50S ribosomal subunits, and thus maintains levels of free tRNAs and 50S ribosomes. The chain is Peptidyl-tRNA hydrolase from Helicobacter pylori (strain J99 / ATCC 700824) (Campylobacter pylori J99).